The sequence spans 499 residues: Diacylglycerol kinase 1 (499 aa).

One can recognise a DAGKc domain in the interval 41–194 (APCCPVVVFI…IDSWHIIMRM (154 aa)). Residues 442 to 479 (PCKSKSVNDPSSPMCCSNHDDDERNSLEDEDEWEEGRK) are disordered. Positions 446-456 (KSVNDPSSPMC) are enriched in polar residues. Basic and acidic residues predominate over residues 459-468 (NHDDDERNSL).

This sequence belongs to the eukaryotic diacylglycerol kinase family. Monomer. Highly expressed in roots.

The catalysed reaction is a 1,2-diacyl-sn-glycerol + ATP = a 1,2-diacyl-sn-glycero-3-phosphate + ADP + H(+). Its function is as follows. Phosphorylates the second messenger diacylglycerol (DAG) to generate phosphatidic acid (PA), another important signaling molecule. PA is required for plant development and responses to abiotic stress. May play a role in disease resistance responses to pathogen attack. Modulates root architecture by regulating the ratio of DAG and PA, which have opposite effect on the promotion or suppression of lateral roots vs seminal roots. Suppresses lateral root number, but promotes seminal root and crown root thickness. This is Diacylglycerol kinase 1 from Oryza sativa subsp. japonica (Rice).